We begin with the raw amino-acid sequence, 589 residues long: Aspartate--tRNA ligase (589 aa).

Residue Glu176 participates in L-aspartate binding. Positions 200 to 203 (QLFK) are aspartate. Arg222 contributes to the L-aspartate binding site. Residues 222–224 (RDE) and Gln231 contribute to the ATP site. L-aspartate is bound at residue His449. Glu483 lines the ATP pocket. Arg490 provides a ligand contact to L-aspartate. An ATP-binding site is contributed by 535–538 (GLDR).

This sequence belongs to the class-II aminoacyl-tRNA synthetase family. Type 1 subfamily. Homodimer.

It is found in the cytoplasm. It catalyses the reaction tRNA(Asp) + L-aspartate + ATP = L-aspartyl-tRNA(Asp) + AMP + diphosphate. Its function is as follows. Catalyzes the attachment of L-aspartate to tRNA(Asp) in a two-step reaction: L-aspartate is first activated by ATP to form Asp-AMP and then transferred to the acceptor end of tRNA(Asp). The protein is Aspartate--tRNA ligase of Enterococcus faecalis (strain ATCC 700802 / V583).